The sequence spans 123 residues: UPF0299 membrane protein VV1471 (123 aa).

The next 4 helical transmembrane spans lie at 8–28 (LFGL…GSGI), 35–55 (SVPG…IGLV), 71–91 (MILL…MLIA), and 94–114 (LPII…LGWL).

This sequence belongs to the UPF0299 family.

It localises to the cell inner membrane. This is UPF0299 membrane protein VV1471 from Vibrio vulnificus (strain YJ016).